A 314-amino-acid chain; its full sequence is Malate dehydrogenase (314 aa).

NAD(+)-binding positions include glycine 11–glycine 16 and aspartate 35. Residues arginine 84 and arginine 90 each coordinate substrate. NAD(+)-binding positions include asparagine 97 and isoleucine 120–asparagine 122. Substrate-binding residues include asparagine 122 and arginine 153. The active-site Proton acceptor is the histidine 177.

It belongs to the LDH/MDH superfamily. MDH type 3 family.

The catalysed reaction is (S)-malate + NAD(+) = oxaloacetate + NADH + H(+). In terms of biological role, catalyzes the reversible oxidation of malate to oxaloacetate. This Rickettsia felis (strain ATCC VR-1525 / URRWXCal2) (Rickettsia azadi) protein is Malate dehydrogenase.